We begin with the raw amino-acid sequence, 253 residues long: Aminoglycoside nucleotidyltransferase (4') (253 aa).

As to quaternary structure, homodimer.

It carries out the reaction kanamycin A + ATP = 4'-adenylylkanamycin A + diphosphate. The enzyme catalyses amikacin + ATP = 4'-adenylylamikacin + diphosphate. It catalyses the reaction neomycin B + ATP = 4'-adenylylneomycin B + diphosphate. The catalysed reaction is paromomycin + ATP = 4'-adenylylparomomycin + diphosphate. It carries out the reaction ribostamycin + ATP = 4'-adenylylribostamycin + diphosphate. The enzyme catalyses tobramycin + ATP = 4'-adenylyltobramycin + diphosphate. It catalyses the reaction kanamycin A + CTP = 4'-cytidylylkanamycin A + diphosphate. The catalysed reaction is kanamycin A + GTP = 4'-guanylylkanamycin A + diphosphate. It carries out the reaction kanamycin A + ITP = 4'-inosinylylkanamycin A + diphosphate. The enzyme catalyses dTTP + kanamycin A = 4'-thymidylylkanamycin A + diphosphate. It catalyses the reaction kanamycin A + UTP = 4'-uridylylkanamycin A + diphosphate. The catalysed reaction is kanamycin A + dATP = 4'-(2'-deoxyadenylyl)kanamycin A + diphosphate. It carries out the reaction kanamycin A + dCTP = 4'-(2'-deoxycytidylyl)kanamycin A + diphosphate. The enzyme catalyses kanamycin A + dGTP = 4'-(2'-deoxyguanylyl)kanamycin A + diphosphate. It catalyses the reaction dUTP + kanamycin A = 4'-(2'-deoxyuridylyl)kanamycin A + diphosphate. The catalysed reaction is amikacin + GTP = 4'-guanylylamikacin + diphosphate. It carries out the reaction amikacin + ITP = 4'-inosinylylamikacin + diphosphate. The enzyme catalyses amikacin + CTP = 4'-cytidylylamikacin + diphosphate. It catalyses the reaction amikacin + UTP = 4'-uridylylamikacin + diphosphate. The catalysed reaction is amikacin + dTTP = 4'-thymidylylamikacin + diphosphate. Functionally, inactivates aminoglycoside antibiotics such as kanamycin by catalyzing the transfer of a nucleotidyl group from nucleoside triphosphates such as (d)ATP to the 4'-hydroxyl group of the aminoglycoside. This is Aminoglycoside nucleotidyltransferase (4') from Bacillus sp.